A 666-amino-acid polypeptide reads, in one-letter code: Probable potassium transport system protein Kup (666 aa).

Helical transmembrane passes span 16-36, 58-78, 100-120, 141-161, 165-185, 221-241, 253-273, 292-312, 343-363, 373-393, 399-419, and 424-444; these read GFII…LYTM, ISLI…LIAL, PWLI…GALT, IYQN…VLFG, FGTG…FSFL, IFIL…YSDL, WPFV…WILA, LTVY…QALI, LYIP…VLYF, YGLA…YYLI, PFLA…FFWA, and FMHG…VMFI.

The protein belongs to the HAK/KUP transporter (TC 2.A.72) family.

It localises to the cell membrane. It carries out the reaction K(+)(in) + H(+)(in) = K(+)(out) + H(+)(out). In terms of biological role, transport of potassium into the cell. Likely operates as a K(+):H(+) symporter. The sequence is that of Probable potassium transport system protein Kup from Streptococcus pyogenes serotype M5 (strain Manfredo).